The primary structure comprises 332 residues: Glyceraldehyde-3-phosphate dehydrogenase 3 (332 aa).

NAD(+) is bound by residues Arg11, Ile12, and Asp33. Residues Lys46 and Lys63 each participate in a glycyl lysine isopeptide (Lys-Gly) (interchain with G-Cter in ubiquitin) cross-link. An NAD(+)-binding site is contributed by Thr120. 149-151 (SCT) contacts D-glyceraldehyde 3-phosphate. The active-site Nucleophile is the Cys150. Cys150 and Cys154 each carry cysteine persulfide. Lys160 is covalently cross-linked (Glycyl lysine isopeptide (Lys-Gly) (interchain with G-Cter in URM1)). D-glyceraldehyde 3-phosphate-binding positions include Thr180, 209 to 210 (TG), and Arg232. The residue at position 302 (Ser302) is a Phosphoserine. Lys307 is covalently cross-linked (Glycyl lysine isopeptide (Lys-Gly) (interchain with G-Cter in URM1)). NAD(+)-binding residues include Asn314 and Tyr318.

Belongs to the glyceraldehyde-3-phosphate dehydrogenase family. Homotetramer. In terms of processing, conjugated to URM1, a ubiquitin-like protein, in response to oxidative stresses. The attachment of URM1 to lysine residues exclusively depends on the presence of a peroxidatic cysteine in the target protein, with low specificity for the particular residue, motif, or structural context at which urmylation can occur. The URM1-conjugation reaction is mechanistically and directly coupled to the process of cysteine persulfidation, transfering the sulfur atom of the URM1 thiocarboxyl group to redox-active cysteine residues in the target protein if it is exposed to oxidative conditions. Post-translationally, persulfidated on specific redox-active cysteine residues. Persulfidation (also called protein S-sulfhydration) may provide a molecular mechanism that enables cells to protect vulnerable cysteine residues from reactive oxygen species (ROS) under stress conditions.

Its subcellular location is the cytoplasm. It localises to the mitochondrion. The enzyme catalyses D-glyceraldehyde 3-phosphate + phosphate + NAD(+) = (2R)-3-phospho-glyceroyl phosphate + NADH + H(+). The catalysed reaction is NADH + H2O = (6R)-NADHX. It catalyses the reaction NADH + H2O = (6S)-NADHX. It carries out the reaction NADPH + H2O = (6R)-NADPHX. The enzyme catalyses NADPH + H2O = (6S)-NADPHX. It functions in the pathway carbohydrate degradation; glycolysis; pyruvate from D-glyceraldehyde 3-phosphate: step 1/5. Functionally, glyceraldehyde-3-phosphate dehydrogenase (GAPDH) involved in glycolysis and gluconeogenesis. Catalyzes the reaction of glyceraldehyde-3-phosphate to 1,3 bis-phosphoglycerate. The contribution of the TDH1, TDH2, and TDH3 to the total glyceraldehyde-3-phosphate dehydrogenase activity is 10-15, 25-30, and 50-60%, respectively. In terms of biological role, as a side activity, catalyzes the hydration of the nicotinamide ring of NADH or NADPH at the C6 position to give the corresponding hydrates, NADHX and NADPHX, which exist as R and S epimers, that cannot act as electron donors or acceptors and inhibit several dehydrogenases, making them toxic. In Saccharomyces cerevisiae (strain ATCC 204508 / S288c) (Baker's yeast), this protein is Glyceraldehyde-3-phosphate dehydrogenase 3.